A 482-amino-acid chain; its full sequence is Probable F-box protein At1g30780 (482 aa).

Positions 230-280 (EIDLDSLPFDLKMVILTRLSAKSLTNFKRVSKMWSSIIGSQRFIDSFFTMS) constitute an F-box domain.

This chain is Probable F-box protein At1g30780, found in Arabidopsis thaliana (Mouse-ear cress).